Consider the following 456-residue polypeptide: RuvB-like helicase 1 (456 aa).

An ATP-binding site is contributed by Gly70–Thr77.

This sequence belongs to the RuvB family. As to quaternary structure, forms homohexameric rings. May form a dodecamer with rept made of two stacked hexameric rings. Component of the chromatin remodeling Ino80 complex.

Its subcellular location is the nucleus. It carries out the reaction ATP + H2O = ADP + phosphate + H(+). Acts as a transcriptional coactivator in Wg signaling. In terms of biological role, proposed core component of the chromatin remodeling Ino80 complex which is involved in transcriptional regulation, DNA replication and probably DNA repair. The polypeptide is RuvB-like helicase 1 (Aedes aegypti (Yellowfever mosquito)).